A 1724-amino-acid chain; its full sequence is Protein scribble homolog (1724 aa).

The sufficient for targeting to adherens junction stretch occupies residues 1 to 821 (MLKCIPLWRC…MTVLRERMVE (821 aa)). LRR repeat units follow at residues 11–34 (NRHV…IYRY), 35–58 (NRSL…FFRL), 59–81 (HNLR…VANF), 83–105 (QLVE…KFCQ), 107–127 (LEIA…FTQL), 128–150 (RGLA…IGNL), 151–174 (SNLV…SFLV), 176–196 (LEQL…LGAL), 197–219 (PNLR…LGNL), 221–242 (QLVC…ISGL), 244–265 (ALTD…IGSL), 266–288 (KKLS…IGEC), 289–311 (ENLT…LGKL), 312–334 (KKLT…LGGC), 336–357 (SLNV…LANA), 359–380 (ELHV…LANL), and 382–405 (LKAM…DDEQ). Disordered regions lie at residues 451 to 484 (RDDS…LKVM), 496 to 620 (YTAR…RKDT), and 646 to 683 (SHDG…HTPF). The span at 518-534 (SNQSHDSQASSSTTSAT) shows a compositional bias: low complexity. A compositionally biased stretch (acidic residues) spans 554 to 567 (VQEEEDLDEMEVEY). The span at 574 to 583 (FAEEPIIRGG) shows a compositional bias: basic and acidic residues. Positions 584–598 (DEDDDYDNDDDDAER) are enriched in acidic residues. Residues 611-620 (EKQRLIRKDT) are compositionally biased toward basic and acidic residues. Over residues 661-678 (RDGEDDEEEEEDEDEEDD) the composition is skewed to acidic residues. PDZ domains are found at residues 731-818 (TLSI…LRER), 867-955 (ATCL…DREQ), 1005-1094 (EVTL…RRDP), and 1101-1193 (EIVI…CDGF). Residues 955–995 (QSSVGGASPRTRPHSPPPPEPSDSPEQEDGGDEHLGNHLNC) are disordered. Disordered stretches follow at residues 1283–1407 (LQKV…DRQK), 1414–1433 (KQQT…EDDL), 1449–1468 (REFM…AKQV), and 1488–1555 (SLGS…GESA). Positions 1295 to 1306 (FRIDSPVRDAAH) are enriched in basic and acidic residues. Composition is skewed to polar residues over residues 1308-1329 (PHNS…NAST), 1346-1357 (PASQDGHSSPNP), and 1364-1385 (PINS…KQPS). A compositionally biased stretch (basic and acidic residues) spans 1395–1407 (HSPEQRSFKDRQK). Residues 1430-1461 (EDDLKKMKEEEAKRIEQRAREFMLDEDEEEEE) adopt a coiled-coil conformation. The span at 1453-1463 (LDEDEEEEEED) shows a compositional bias: acidic residues. A compositionally biased stretch (polar residues) spans 1490–1506 (GSPTSRQCATPPNYSAT). Over residues 1507 to 1518 (PPSHCGSSGPSS) the composition is skewed to low complexity. A compositionally biased stretch (basic and acidic residues) spans 1521-1538 (GKGDSQRNSVEDSFRLEQ). Serine 1609 carries the phosphoserine modification. The tract at residues 1621–1684 (IAKSKEGKKR…FMDESSSNAV (64 aa)) is disordered. Residues 1623–1632 (KSKEGKKRGT) are compositionally biased toward basic and acidic residues.

Post-translationally, palmitoylated.

It is found in the cell membrane. The protein resides in the cell junction. Its subcellular location is the adherens junction. The protein localises to the cell projection. It localises to the lamellipodium. It is found in the cytoplasm. The protein resides in the postsynapse. Its subcellular location is the presynapse. Functionally, scaffold protein involved in different aspects of polarized cells differentiation regulating epithelial and neuronal morphogenesis. Regulates the caudal migration of the nVII motor neurons. Required for convergent extension movements during gastrulation. The sequence is that of Protein scribble homolog (scrib) from Danio rerio (Zebrafish).